The following is a 100-amino-acid chain: A-type ATP synthase subunit F (100 aa).

This sequence belongs to the V-ATPase F subunit family. Has multiple subunits with at least A(3), B(3), C, D, E, F, H, I and proteolipid K(x).

Its subcellular location is the cell membrane. Component of the A-type ATP synthase that produces ATP from ADP in the presence of a proton gradient across the membrane. This is A-type ATP synthase subunit F from Methanoregula boonei (strain DSM 21154 / JCM 14090 / 6A8).